The following is a 147-amino-acid chain: Large ribosomal subunit protein uL15 (147 aa).

Basic and acidic residues predominate over residues 1–13; the sequence is MRLHDLKPAEGAR. Residues 1–58 form a disordered region; it reads MRLHDLKPAEGARRERKRVGRGIGSGHGKTSGRGQKGQKARSGGGVRPGFEGGQMPLT. 2 stretches are compositionally biased toward gly residues: residues 21-35 and 42-52; these read RGIG…GRGQ and SGGGVRPGFEG.

This sequence belongs to the universal ribosomal protein uL15 family. In terms of assembly, part of the 50S ribosomal subunit.

Binds to the 23S rRNA. The chain is Large ribosomal subunit protein uL15 from Thermoanaerobacter sp. (strain X514).